The sequence spans 119 residues: MVKLAFPRELRLLTPTHFTFVFQQPQRAGTPQITILGRLNALGHPRIGLTVAKKHVKRAHERNRIKRLTRESFRLRQHELPAMDFVIVAKKGIGELDNHALTEALEKLWRRHCRLARGS.

This sequence belongs to the RnpA family. As to quaternary structure, consists of a catalytic RNA component (M1 or rnpB) and a protein subunit.

The enzyme catalyses Endonucleolytic cleavage of RNA, removing 5'-extranucleotides from tRNA precursor.. In terms of biological role, RNaseP catalyzes the removal of the 5'-leader sequence from pre-tRNA to produce the mature 5'-terminus. It can also cleave other RNA substrates such as 4.5S RNA. The protein component plays an auxiliary but essential role in vivo by binding to the 5'-leader sequence and broadening the substrate specificity of the ribozyme. The protein is Ribonuclease P protein component of Erwinia tasmaniensis (strain DSM 17950 / CFBP 7177 / CIP 109463 / NCPPB 4357 / Et1/99).